The chain runs to 153 residues: MKEPSAVHGRILALDFGTRRIGLAVSDPLGITAQGLQTLLRKNKRTDLAALRSVIEQNEIREIVVGLPLRLSGADSSSTEKAREFAAWLEKEFALPVHMWDERFTSVEANRVLRESEMSIKKRGEAVDRLSAVLILQAFLERRGIDREEPLSS.

Belongs to the YqgF nuclease family.

The protein localises to the cytoplasm. Could be a nuclease involved in processing of the 5'-end of pre-16S rRNA. The polypeptide is Putative pre-16S rRNA nuclease (Koribacter versatilis (strain Ellin345)).